We begin with the raw amino-acid sequence, 173 residues long: Large ribosomal subunit protein uL10 (173 aa).

The protein belongs to the universal ribosomal protein uL10 family. As to quaternary structure, part of the ribosomal stalk of the 50S ribosomal subunit. The N-terminus interacts with L11 and the large rRNA to form the base of the stalk. The C-terminus forms an elongated spine to which L12 dimers bind in a sequential fashion forming a multimeric L10(L12)X complex.

In terms of biological role, forms part of the ribosomal stalk, playing a central role in the interaction of the ribosome with GTP-bound translation factors. The protein is Large ribosomal subunit protein uL10 of Thermus thermophilus (strain ATCC BAA-163 / DSM 7039 / HB27).